The sequence spans 2508 residues: Male gametocyte surface protein P230p (2508 aa).

A signal peptide spans 1 to 34 (MFIYLFIYLFFKMDKKRTFYYLFFFFTFLVYVLY). 4 N-linked (GlcNAc...) asparagine glycosylation sites follow: asparagine 230, asparagine 254, asparagine 362, and asparagine 414. Residues 394–516 (KILGLSTNEK…GLGETSVDKD (123 aa)) enclose the 6-Cys 1 domain. A disulfide bond links cysteine 443 and cysteine 493. N-linked (GlcNAc...) asparagine glycans are attached at residues asparagine 601 and asparagine 674. 6-Cys domains lie at 676–800 (SVSF…IVKR), 831–1096 (ITYL…LKSF), 1099–1231 (PIEG…LELN), 1268–1428 (KKHI…IPQH), and 1433–1565 (KFYG…NEDI). A disulfide bridge links cysteine 680 with cysteine 700. A glycan (N-linked (GlcNAc...) asparagine) is linked at asparagine 703. 2 disulfides stabilise this stretch: cysteine 714–cysteine 775 and cysteine 725–cysteine 773. 6 N-linked (GlcNAc...) asparagine glycosylation sites follow: asparagine 779, asparagine 849, asparagine 986, asparagine 995, asparagine 1065, and asparagine 1074. 2 cysteine pairs are disulfide-bonded: cysteine 835–cysteine 856 and cysteine 871–cysteine 1072. Intrachain disulfides connect cysteine 1103-cysteine 1129, cysteine 1144-cysteine 1206, and cysteine 1157-cysteine 1204. Asparagine 1231 carries an N-linked (GlcNAc...) asparagine glycan. 5 disulfides stabilise this stretch: cysteine 1272-cysteine 1293, cysteine 1308-cysteine 1404, cysteine 1437-cysteine 1464, cysteine 1478-cysteine 1547, and cysteine 1488-cysteine 1545. N-linked (GlcNAc...) asparagine glycosylation occurs at asparagine 1385. Residues asparagine 1525, asparagine 1550, asparagine 1567, asparagine 1750, asparagine 1755, and asparagine 1788 are each glycosylated (N-linked (GlcNAc...) asparagine). 2 consecutive 6-Cys domains span residues 1656 to 1804 (KKKI…IKKN) and 1807 to 1984 (KILG…IVGD). The cysteines at positions 1704 and 1782 are disulfide-linked. Intrachain disulfides connect cysteine 1811-cysteine 1883, cysteine 1897-cysteine 1966, and cysteine 1908-cysteine 1964. N-linked (GlcNAc...) asparagine glycans are attached at residues asparagine 2016 and asparagine 2047. Positions 2081-2113 (SDEGDGYQADEDIGGEDDAEDVDGEGDDEDDNI) are disordered. Residues 2082 to 2112 (DEGDGYQADEDIGGEDDAEDVDGEGDDEDDN) show a composition bias toward acidic residues. N-linked (GlcNAc...) asparagine glycosylation is found at asparagine 2143, asparagine 2211, asparagine 2239, and asparagine 2255. 6-Cys domains are found at residues 2197–2354 (IINI…VKSN) and 2357–2481 (KIYG…YEPY). 3 disulfide bridges follow: cysteine 2361–cysteine 2386, cysteine 2400–cysteine 2461, and cysteine 2411–cysteine 2459.

It is found in the cell surface. The protein resides in the cell membrane. Functionally, plays an essential role in male gamete fertility. Required for the binding to erythrocytes and thus, for the formation of exflagellation centers. This Plasmodium falciparum (isolate 3D7) protein is Male gametocyte surface protein P230p (PFS230P).